A 347-amino-acid chain; its full sequence is Acetylglutamate kinase, chloroplastic (347 aa).

The transit peptide at 1–50 (MATVTSNASPKSFSFTVSNPFKTLIPNKSPSLCYPTRNKNHHRLGFSIKA) directs the protein to the chloroplast. T51 carries the post-translational modification N-acetylthreonine. Residue 94 to 95 (GA) coordinates ATP. N-acetyl-L-glutamate contacts are provided by residues G126, R148, and 242–245 (NINA). Residue K260 participates in L-arginine binding. ATP is bound by residues 265–266 (TD) and L271. K282 contributes to the L-arginine binding site. 297-305 (KVAGGMIPK) provides a ligand contact to ATP. Residues 334 to 337 (EIMS) and G342 each bind L-arginine.

This sequence belongs to the acetylglutamate kinase family. ArgB subfamily. Interacts with GLB1. Interaction is dependent of MgATP and inhibited by 2-oxoglutarate, arginine, glutamate, citrate, and oxaloacetate.

The protein localises to the plastid. The protein resides in the chloroplast stroma. The enzyme catalyses N-acetyl-L-glutamate + ATP = N-acetyl-L-glutamyl 5-phosphate + ADP. It participates in amino-acid biosynthesis; L-arginine biosynthesis; N(2)-acetyl-L-ornithine from L-glutamate: step 2/4. Its activity is regulated as follows. Inhibited by arginine. Inhibition is relieved by binding to GLB1. In terms of biological role, involved in the arginine biosynthetic pathway via the intermediate compound ornithine. This Arabidopsis thaliana (Mouse-ear cress) protein is Acetylglutamate kinase, chloroplastic.